A 323-amino-acid polypeptide reads, in one-letter code: Lipoyl synthase (323 aa).

C65, C70, C76, C91, C95, C98, and S304 together coordinate [4Fe-4S] cluster. Residues 77–293 form the Radical SAM core domain; the sequence is FNNGTATFMI…KKEALSIGFT (217 aa).

The protein belongs to the radical SAM superfamily. Lipoyl synthase family. It depends on [4Fe-4S] cluster as a cofactor.

Its subcellular location is the cytoplasm. The enzyme catalyses [[Fe-S] cluster scaffold protein carrying a second [4Fe-4S](2+) cluster] + N(6)-octanoyl-L-lysyl-[protein] + 2 oxidized [2Fe-2S]-[ferredoxin] + 2 S-adenosyl-L-methionine + 4 H(+) = [[Fe-S] cluster scaffold protein] + N(6)-[(R)-dihydrolipoyl]-L-lysyl-[protein] + 4 Fe(3+) + 2 hydrogen sulfide + 2 5'-deoxyadenosine + 2 L-methionine + 2 reduced [2Fe-2S]-[ferredoxin]. It participates in protein modification; protein lipoylation via endogenous pathway; protein N(6)-(lipoyl)lysine from octanoyl-[acyl-carrier-protein]: step 2/2. In terms of biological role, catalyzes the radical-mediated insertion of two sulfur atoms into the C-6 and C-8 positions of the octanoyl moiety bound to the lipoyl domains of lipoate-dependent enzymes, thereby converting the octanoylated domains into lipoylated derivatives. The chain is Lipoyl synthase from Buchnera aphidicola subsp. Acyrthosiphon pisum (strain APS) (Acyrthosiphon pisum symbiotic bacterium).